A 171-amino-acid polypeptide reads, in one-letter code: uncharacterized protein (171 aa).

A helical membrane pass occupies residues 5 to 25 (FLLTIFALWVGGFGYYLYLIN).

The protein resides in the membrane. This is an uncharacterized protein from Rickettsia conorii (strain ATCC VR-613 / Malish 7).